Here is a 265-residue protein sequence, read N- to C-terminus: Mlc titration factor A (265 aa).

Zn(2+) is bound by residues His111, His148, His152, and Glu211.

This sequence belongs to the MtfA family. As to quaternary structure, interacts with Mlc. The cofactor is Zn(2+).

It is found in the cytoplasm. Functionally, involved in the modulation of the activity of the glucose-phosphotransferase system (glucose-PTS). Interacts with the transcriptional repressor Mlc, preventing its interaction with DNA and leading to the modulation of expression of genes regulated by Mlc, including ptsG, which encodes the PTS system glucose-specific EIICB component. Its function is as follows. Shows zinc-dependent metallopeptidase activity. The sequence is that of Mlc titration factor A from Salmonella paratyphi A (strain AKU_12601).